The chain runs to 275 residues: Bis(5'-nucleosyl)-tetraphosphatase, symmetrical (275 aa).

Belongs to the Ap4A hydrolase family.

It catalyses the reaction P(1),P(4)-bis(5'-adenosyl) tetraphosphate + H2O = 2 ADP + 2 H(+). Its function is as follows. Hydrolyzes diadenosine 5',5'''-P1,P4-tetraphosphate to yield ADP. This Nitrosospira multiformis (strain ATCC 25196 / NCIMB 11849 / C 71) protein is Bis(5'-nucleosyl)-tetraphosphatase, symmetrical.